A 243-amino-acid polypeptide reads, in one-letter code: Homeobox protein goosecoid isoform B (243 aa).

Positions lysine 148–lysine 207 form a DNA-binding region, homeobox. The disordered stretch occupies residues alanine 201–serine 243. Residues alanine 217 to asparagine 226 are compositionally biased toward polar residues. A compositionally biased stretch (basic and acidic residues) spans serine 227–serine 243.

This sequence belongs to the paired homeobox family. Bicoid subfamily.

Its subcellular location is the nucleus. Plays a central role in executing Spemann's organizer phenomenon (the dorsal blastopore lip of the early Xenopus laevis gastrula can organize a complete secondary body axis when transplanted to another embryo). The sequence is that of Homeobox protein goosecoid isoform B (gsc-b) from Xenopus laevis (African clawed frog).